Reading from the N-terminus, the 396-residue chain is Decapping nuclease RAI1 (396 aa).

107–109 lines the substrate pocket; the sequence is YRG. Glutamate 179 serves as a coordination point for a divalent metal cation. Residue glutamate 228 coordinates substrate. A divalent metal cation contacts are provided by aspartate 230, glutamate 249, and leucine 250. Residues lysine 251 and glutamine 275 each contribute to the substrate site.

This sequence belongs to the DXO/Dom3Z family. As to quaternary structure, interacts with RAT1; the interaction is direct, stabilizes RAT1 protein structure and stimulates its exoribonuclease activity. The interaction also stimulates RAI1 pyrophosphohydrolase activity, probably by recruiting it to mRNA substrates. A divalent metal cation serves as cofactor.

The protein resides in the nucleus. It carries out the reaction a 5'-end NAD(+)-phospho-ribonucleoside in mRNA + H2O = a 5'-end phospho-ribonucleoside in mRNA + NAD(+) + H(+). It catalyses the reaction a 5'-end (N(7)-methyl 5'-triphosphoguanosine)-ribonucleoside-ribonucleotide in mRNA + H2O = a (N(7)-methyl 5'-triphosphoguanosine)-nucleoside + a 5'-end phospho-ribonucleoside in mRNA + H(+). The catalysed reaction is a 5'-end triphospho-ribonucleoside in mRNA + H2O = a 5'-end phospho-ribonucleoside in mRNA + diphosphate + H(+). Its function is as follows. Decapping enzyme for NAD-capped RNAs: specifically hydrolyzes the nicotinamide adenine dinucleotide (NAD) cap from a subset of RNAs by removing the entire NAD moiety from the 5'-end of an NAD-capped RNA. The NAD-cap is present at the 5'-end of some RNAs and snoRNAs. In contrast to the canonical 5'-end N7 methylguanosine (m7G) cap, the NAD cap promotes mRNA decay. Also acts as a non-canonical decapping enzyme that removes the entire cap structure of m7G capped or incompletely capped RNAs. Has decapping activity toward incomplete 5'-end m7G cap mRNAs such as unmethylated 5'-end-capped RNA (cap0), while it has no activity toward 2'-O-ribose methylated m7G cap (cap1). Also possesses RNA 5'-pyrophosphohydrolase activity by hydrolyzing the 5'-end triphosphate to release pyrophosphates. Stimulates exoribonuclease activity of Rat1, allowing it to degrade RNAs with stable secondary structure more effectively. This chain is Decapping nuclease RAI1, found in Scheffersomyces stipitis (strain ATCC 58785 / CBS 6054 / NBRC 10063 / NRRL Y-11545) (Yeast).